Consider the following 1055-residue polypeptide: Leukotoxin (1055 aa).

Residues Q11–L49 are a coiled coil. 2 cholesterol recognition/amino acid consensus (CRAC) region regions span residues L334–R340 and V502–K506. Hemolysin-type calcium-binding repeat units lie at residues I721–F738, H739–L756, Y757–L774, Y775–L792, D793–L810, R811–L828, and D829–Y846. The segment at G795–G815 is disordered. Positions K990–K1009 are disordered. Positions S993–L1006 are enriched in low complexity.

It belongs to the RTX prokaryotic toxin (TC 1.C.11) family. Interacts specifically with the superoxide dismutase [Cu-Zn]. This interaction may protect LtxA from reactive oxygen species and reactive nitrogen species produced by host inflammatory cells during disease. Interacts with the human leukocyte adhesion glycoprotein LFA-1 (ITGAL-ITGB2). Acylated at Lys-562 and Lys-687 by LtxC. This modification is required for full activity. Isolated methyl esters contain palmitoyl and palmitolyl fatty acyl groups with smaller quantities of myristic and stearic fatty acids.

It localises to the cell outer membrane. Its subcellular location is the secreted. In terms of biological role, virulence factor that plays an important role in immune evasion. Lyses human lymphocytes and monocytes. Binds to the LFA-1 integrin on the surface of the host cell and to cholesterol-containing membranes, which probably results in large LtxA-LFA-1 clusters in lipid rafts. Also shows beta-hemolytic activity on certain types of growth media. The polypeptide is Leukotoxin (Aggregatibacter actinomycetemcomitans (Actinobacillus actinomycetemcomitans)).